A 540-amino-acid chain; its full sequence is Protein PALS2 (540 aa).

L27 domains are found at residues 1-48 (MQQV…EDSK) and 49-107 (LEAV…YDSP). Residues 130 to 209 (ILGIHKRAGE…SVTLKILPSY (80 aa)) form the PDZ domain. Positions 215–284 (PQQVFVKCHF…PSQFLEEKRK (70 aa)) constitute an SH3 domain. The 188-residue stretch at 338-525 (RKTLVLIGAQ…AFEKLQTAIE (188 aa)) folds into the Guanylate kinase-like domain. Phosphotyrosine is present on Y500.

Belongs to the MAGUK family. Interacts with CADM1. Interacts with the LIN7 proteins. Abundant in testis, brain, and kidney with lower levels detectable in other tissues.

Its subcellular location is the membrane. This is Protein PALS2 from Homo sapiens (Human).